The sequence spans 563 residues: Arginine--tRNA ligase (563 aa).

The 'HIGH' region signature appears at 121–131 (PNIAKPFSIGH).

The protein belongs to the class-I aminoacyl-tRNA synthetase family. As to quaternary structure, monomer.

It is found in the cytoplasm. The enzyme catalyses tRNA(Arg) + L-arginine + ATP = L-arginyl-tRNA(Arg) + AMP + diphosphate. This chain is Arginine--tRNA ligase, found in Streptococcus pyogenes serotype M4 (strain MGAS10750).